The sequence spans 437 residues: Adenosylhomocysteinase (437 aa).

T58, D133, and E158 together coordinate substrate. 159–161 (TTT) serves as a coordination point for NAD(+). Substrate is bound by residues K188 and D192. Residues N193, 224–229 (GDVGKG), E245, 301–303 (VGH), and N348 each bind NAD(+).

The protein belongs to the adenosylhomocysteinase family. As to quaternary structure, homotetramer. It depends on NAD(+) as a cofactor.

The enzyme catalyses S-adenosyl-L-homocysteine + H2O = L-homocysteine + adenosine. The protein operates within amino-acid biosynthesis; L-homocysteine biosynthesis; L-homocysteine from S-adenosyl-L-homocysteine: step 1/1. Functionally, adenosylhomocysteine is a competitive inhibitor of S-adenosyl-L-methionine-dependent methyl transferase reactions; therefore adenosylhomocysteinase may play a key role in the control of methylations via regulation of the intracellular concentration of adenosylhomocysteine. The sequence is that of Adenosylhomocysteinase (ahcy-1) from Caenorhabditis elegans.